Here is a 339-residue protein sequence, read N- to C-terminus: uncharacterized protein (339 aa).

VOC domains lie at 2–127 and 141–276; these read EFDY…VRSE and TIDH…CLEI. 3 residues coordinate Fe cation: histidine 144, histidine 222, and glutamate 306.

It belongs to the 4HPPD family. Fe cation serves as cofactor.

This is an uncharacterized protein from Synechocystis sp. (strain ATCC 27184 / PCC 6803 / Kazusa).